A 636-amino-acid polypeptide reads, in one-letter code: uncharacterized protein (636 aa).

Transmembrane regions (helical) follow at residues 12 to 32 (AVIY…FGSI), 34 to 54 (IMHL…TTTG), and 75 to 95 (IGAG…FMSF). One can recognise an RCK N-terminal domain in the interval 112 to 231 (KNHFILCGFG…KKAGANRIIS (120 aa)).

The protein resides in the cell membrane. This is an uncharacterized protein from Methanothermus fervidus (strain ATCC 43054 / DSM 2088 / JCM 10308 / V24 S).